The following is a 251-amino-acid chain: Triosephosphate isomerase (251 aa).

A substrate-binding site is contributed by 9 to 11 (NWK). Histidine 95 acts as the Electrophile in catalysis. Residue glutamate 167 is the Proton acceptor of the active site. Residues glycine 173, serine 212, and 233-234 (GG) each bind substrate.

This sequence belongs to the triosephosphate isomerase family. Homodimer.

The protein resides in the cytoplasm. It catalyses the reaction D-glyceraldehyde 3-phosphate = dihydroxyacetone phosphate. The protein operates within carbohydrate biosynthesis; gluconeogenesis. It participates in carbohydrate degradation; glycolysis; D-glyceraldehyde 3-phosphate from glycerone phosphate: step 1/1. In terms of biological role, involved in the gluconeogenesis. Catalyzes stereospecifically the conversion of dihydroxyacetone phosphate (DHAP) to D-glyceraldehyde-3-phosphate (G3P). This chain is Triosephosphate isomerase, found in Pseudomonas putida (strain W619).